The primary structure comprises 661 residues: UvrABC system protein B (661 aa).

Residues 25–414 enclose the Helicase ATP-binding domain; sequence AGLSSKKRSQ…GTVVELIIRP (390 aa). An ATP-binding site is contributed by 38–45; that stretch reads GITGSGKT. The Beta-hairpin signature appears at 91 to 114; the sequence is YYDYYQPEAYIARTDTFIEKDSSI. The Helicase C-terminal domain occupies 430–592; that stretch reads QVEDLISEIQ…IIPKTINRAI (163 aa). The UVR domain occupies 621–656; sequence KTHIDKLKKEMLKAASNLEFEQAVKLRDQLKTLEEA.

This sequence belongs to the UvrB family. Forms a heterotetramer with UvrA during the search for lesions. Interacts with UvrC in an incision complex.

It is found in the cytoplasm. The UvrABC repair system catalyzes the recognition and processing of DNA lesions. A damage recognition complex composed of 2 UvrA and 2 UvrB subunits scans DNA for abnormalities. Upon binding of the UvrA(2)B(2) complex to a putative damaged site, the DNA wraps around one UvrB monomer. DNA wrap is dependent on ATP binding by UvrB and probably causes local melting of the DNA helix, facilitating insertion of UvrB beta-hairpin between the DNA strands. Then UvrB probes one DNA strand for the presence of a lesion. If a lesion is found the UvrA subunits dissociate and the UvrB-DNA preincision complex is formed. This complex is subsequently bound by UvrC and the second UvrB is released. If no lesion is found, the DNA wraps around the other UvrB subunit that will check the other stand for damage. The sequence is that of UvrABC system protein B from Rickettsia conorii (strain ATCC VR-613 / Malish 7).